A 338-amino-acid polypeptide reads, in one-letter code: 3-dehydroquinate synthase (338 aa).

Belongs to the archaeal-type DHQ synthase family.

It catalyses the reaction 2-amino-2,3,7-trideoxy-D-lyxo-hept-6-ulosonate + NAD(+) + H2O = 3-dehydroquinate + NH4(+) + NADH + H(+). Its function is as follows. Catalyzes the oxidative deamination and cyclization of 2-amino-3,7-dideoxy-D-threo-hept-6-ulosonic acid (ADH) to yield 3-dehydroquinate (DHQ), which is fed into the canonical shikimic pathway of aromatic amino acid biosynthesis. The chain is 3-dehydroquinate synthase from Cenarchaeum symbiosum (strain A).